The sequence spans 361 residues: tRNA-specific 2-thiouridylase MnmA (361 aa).

Residues 11-18 (GMSGGVDS) and M37 contribute to the ATP site. C106 serves as the catalytic Nucleophile. C106 and C202 are disulfide-bonded. Residue G130 coordinates ATP. The segment at 152-154 (KDQ) is interaction with tRNA. Residue C202 is the Cysteine persulfide intermediate of the active site. The interval 308–309 (RY) is interaction with tRNA.

It belongs to the MnmA/TRMU family.

It is found in the cytoplasm. It carries out the reaction S-sulfanyl-L-cysteinyl-[protein] + uridine(34) in tRNA + AH2 + ATP = 2-thiouridine(34) in tRNA + L-cysteinyl-[protein] + A + AMP + diphosphate + H(+). Functionally, catalyzes the 2-thiolation of uridine at the wobble position (U34) of tRNA, leading to the formation of s(2)U34. This chain is tRNA-specific 2-thiouridylase MnmA, found in Clostridium botulinum (strain Eklund 17B / Type B).